The following is a 1121-amino-acid chain: Phytochrome 2 (1121 aa).

The GAF domain occupies 214–393 (DIGLLCDTVV…VFGMQLNMEV (180 aa)). Cys-319 is a phytochromobilin binding site. 2 PAS domains span residues 608–679 (VANE…SQGE) and 742–813 (DYKT…TKFM). The Histidine kinase domain maps to 893-1113 (YIRQEIKNPL…VVYVELPMAQ (221 aa)).

The protein belongs to the phytochrome family. In terms of assembly, homodimer. Contains one covalently linked phytochromobilin chromophore.

Its function is as follows. Regulatory photoreceptor which exists in two forms that are reversibly interconvertible by light: the Pr form that absorbs maximally in the red region of the spectrum and the Pfr form that absorbs maximally in the far-red region. Photoconversion of Pr to Pfr induces an array of morphogenic responses, whereas reconversion of Pfr to Pr cancels the induction of those responses. Pfr controls the expression of a number of nuclear genes including those encoding the small subunit of ribulose-bisphosphate carboxylase, chlorophyll A/B binding protein, protochlorophyllide reductase, rRNA, etc. It also controls the expression of its own gene(s) in a negative feedback fashion. This chain is Phytochrome 2 (PHY2), found in Ceratodon purpureus (Fire moss).